The sequence spans 658 residues: MLYPQEFDVIVVGAGHAGTEAALAAARLGQRTLLLTQSLETLGQMSCNPSIGGIGKGHLVKEVDALGGAMALATDESGIQFRILNRSKGPAVRATRAQADRLLYKAAIRRRLENQPGLWLFQQAVDDLMLEGDRVVGAVTQVGVVFCARAVVLTAGTFLDGKIHVGLSHYAAGRAGEPSAIGLSARLKELKLPQGRLKTGTPPRIDGRSIDWSQCEEQPGDGMPGGVNAGQVPVFSFMAHAYGGARMHPQQLPCWITHTNQRTHAIIRSGFDRSPMFTGSIEGVGPRYCPSVEDKINRFADKDSHQVFLEPEGLGTHEVYPNGISTSLPFDIQYQLVRSMAGLENAHILRPGYAIEYDYFDPRALKSNFETRQIRGLFFAGQINGTTGYEEAAAQGLFAGVNAALQCRGDAPWLPGRDQAYLGVLVDDLITKGVTEPYRMFTSRAEFRLQLREDNADMRLTEVGRRMGLVDDARWEVFSRKRDAVLRETERLKATWVNPRNLPDIESGRVLGKPMAHEYSLFELLRRPDVDYAGLMSLDGGKYAAADVSRETLGMLSESVVEQVEIAAKYAGYIERQKGEVERAAHFETLRLPAGLDYAQVTALSIEARQVLSRHRPETLGQASRITGITPAAISLLLVHLKKGGFKGFMSANADAQA.

Position 13 to 18 (13 to 18 (GAGHAG)) interacts with FAD. 285–299 (GPRYCPSVEDKINRF) is a binding site for NAD(+).

Belongs to the MnmG family. As to quaternary structure, homodimer. Heterotetramer of two MnmE and two MnmG subunits. FAD serves as cofactor.

Its subcellular location is the cytoplasm. Its function is as follows. NAD-binding protein involved in the addition of a carboxymethylaminomethyl (cmnm) group at the wobble position (U34) of certain tRNAs, forming tRNA-cmnm(5)s(2)U34. The sequence is that of tRNA uridine 5-carboxymethylaminomethyl modification enzyme MnmG from Verminephrobacter eiseniae (strain EF01-2).